The chain runs to 118 residues: Ribosomal silencing factor RsfS (118 aa).

It belongs to the Iojap/RsfS family. In terms of assembly, interacts with ribosomal protein uL14 (rplN).

The protein localises to the cytoplasm. Functionally, functions as a ribosomal silencing factor. Interacts with ribosomal protein uL14 (rplN), blocking formation of intersubunit bridge B8. Prevents association of the 30S and 50S ribosomal subunits and the formation of functional ribosomes, thus repressing translation. The protein is Ribosomal silencing factor RsfS of Bacillus subtilis (strain 168).